A 90-amino-acid polypeptide reads, in one-letter code: Auxin-responsive protein SAUR22 (90 aa).

This sequence belongs to the ARG7 family.

The protein resides in the cell membrane. Functions as a positive effector of cell expansion through modulation of auxin transport. This Arabidopsis thaliana (Mouse-ear cress) protein is Auxin-responsive protein SAUR22.